The following is a 431-amino-acid chain: Ribonuclease TTHA0252 (431 aa).

Zn(2+) is bound by residues H59, H61, D63, H64, H141, D162, and H400.

The protein belongs to the metallo-beta-lactamase superfamily. RNA-metabolizing metallo-beta-lactamase-like family. In terms of assembly, monomer. It depends on Zn(2+) as a cofactor.

The protein localises to the cytoplasm. Its activity is regulated as follows. Inhibited by cadmium, cobalt, manganese, magnesium, calcium and nickel ions. Its function is as follows. Has endoribonuclease activity towards 23S and 16S rRNA (in vitro). This chain is Ribonuclease TTHA0252, found in Thermus thermophilus (strain ATCC 27634 / DSM 579 / HB8).